The chain runs to 296 residues: MKSNTLGDEGNPARLLIKVTRETLPQVKEKYPFLYLEKGRIEIDDSSIKWIDCDCNVVRLPVAMLNCILLGPGTTVTHEAVKVMAAANCGICWVGDDSLMFYASGQTPTSNTRNMTHQMKLAANPAKALEVARRLFAYRFPDANLENKTLPQMMGMEGLRVRKLYEEMAVKYKVGWKGRRFEPGKFEMSDTTNKILTASNAALYSIILSAVHSMGYSPHIGFIHSGSPLPFIYDLADLYKQQVSIDLAFSLTADMAGYYDRHKIASEFRKRVIEIDLLGKIGPDIETILGKKQCSS.

The Mn(2+) site is built by Glu157, His224, and Asp237.

It belongs to the CRISPR-associated endonuclease Cas1 family. In terms of assembly, homodimer, forms a heterotetramer with a Cas2 homodimer. The cofactor is Mg(2+). Requires Mn(2+) as cofactor.

Its function is as follows. CRISPR (clustered regularly interspaced short palindromic repeat), is an adaptive immune system that provides protection against mobile genetic elements (viruses, transposable elements and conjugative plasmids). CRISPR clusters contain spacers, sequences complementary to antecedent mobile elements, and target invading nucleic acids. CRISPR clusters are transcribed and processed into CRISPR RNA (crRNA). Acts as a dsDNA endonuclease. Involved in the integration of spacer DNA into the CRISPR cassette. The protein is CRISPR-associated endonuclease Cas1 2 of Chlorobaculum tepidum (strain ATCC 49652 / DSM 12025 / NBRC 103806 / TLS) (Chlorobium tepidum).